The sequence spans 561 residues: Putative transport protein YbjL (561 aa).

5 helical membrane-spanning segments follow: residues leucine 8–glycine 28, leucine 32–glutamine 52, phenylalanine 66–phenylalanine 86, methionine 94–phenylalanine 114, and asparagine 158–alanine 178. RCK C-terminal domains lie at arginine 200–asparagine 288 and valine 292–phenylalanine 373. Transmembrane regions (helical) follow at residues leucine 383–phenylalanine 403, phenylalanine 406–leucine 426, phenylalanine 447–glycine 467, methionine 475–alanine 495, and alanine 540–leucine 560.

Belongs to the AAE transporter (TC 2.A.81) family. YbjL subfamily.

It localises to the cell membrane. In Salmonella gallinarum (strain 287/91 / NCTC 13346), this protein is Putative transport protein YbjL.